A 347-amino-acid polypeptide reads, in one-letter code: D-alanine--D-alanine ligase (347 aa).

Residues 134–332 enclose the ATP-grasp domain; it reads KLYAKDLGVK…LAQSLPKTPK (199 aa). An ATP-binding site is contributed by 161–216; that stretch reads LMNFNFPFIIKPNNAGSSLGVNVVKEEKELVYALDGAFEYSKEVLIEPFIQGVKEY. Mg(2+) is bound by residues D288, E300, and N302.

This sequence belongs to the D-alanine--D-alanine ligase family. Requires Mg(2+) as cofactor. Mn(2+) serves as cofactor.

The protein resides in the cytoplasm. It catalyses the reaction 2 D-alanine + ATP = D-alanyl-D-alanine + ADP + phosphate + H(+). It functions in the pathway cell wall biogenesis; peptidoglycan biosynthesis. Cell wall formation. This Helicobacter pylori (strain ATCC 700392 / 26695) (Campylobacter pylori) protein is D-alanine--D-alanine ligase.